A 358-amino-acid chain; its full sequence is Peptide chain release factor 1 (358 aa).

At Q233 the chain carries N5-methylglutamine.

It belongs to the prokaryotic/mitochondrial release factor family. In terms of processing, methylated by PrmC. Methylation increases the termination efficiency of RF1.

The protein localises to the cytoplasm. Peptide chain release factor 1 directs the termination of translation in response to the peptide chain termination codons UAG and UAA. This chain is Peptide chain release factor 1, found in Clostridium botulinum (strain 657 / Type Ba4).